The primary structure comprises 276 residues: Large ribosomal subunit protein uL2 (276 aa).

Disordered stretches follow at residues 37–59 and 224–276; these read QFQKSGRNNNGHITTRHKGGGHK and VAMN…RHKR. Residues 50–59 show a composition bias toward basic residues; that stretch reads TTRHKGGGHK.

This sequence belongs to the universal ribosomal protein uL2 family. Part of the 50S ribosomal subunit. Forms a bridge to the 30S subunit in the 70S ribosome.

Its function is as follows. One of the primary rRNA binding proteins. Required for association of the 30S and 50S subunits to form the 70S ribosome, for tRNA binding and peptide bond formation. It has been suggested to have peptidyltransferase activity; this is somewhat controversial. Makes several contacts with the 16S rRNA in the 70S ribosome. The polypeptide is Large ribosomal subunit protein uL2 (Ralstonia nicotianae (strain ATCC BAA-1114 / GMI1000) (Ralstonia solanacearum)).